The chain runs to 581 residues: MTSSDLTQRKGLTMSDSTPDTPRSTPEDAARRLAVLSAQNERLAQVLGEARGKIVELQQQIEEFAKPPGTFAVFLAEHGDGTLDVMSAGRKMHVGASPSVDLTQLRPGQEVSLNEAFVVVAAGGFEPVGEIVTVKELLDDGRALVVGRSDEERVVRLAGSLAGAPLRAGDALTVDTRSGFVYERIPKAEVEDLVLEEVPDIDYGDIGGLGPQIEQIRDAVELPFNHPDLFREHGLRPPKGILLYGPPGCGKTLIAKAVANSLAAAVARRAAAAAEAGGTVDGSPVLVETANQAKSYFLNVKGPELLNKYVGETERHIRLIFSRAREKASQGYPVVVFFDEMESLFRTRGTGLSSDVETTIVPQLLSEIDGVERLDNVIVIGASNREDMIDPAILRPGRLDVKIKIERPDPEGAREIFAKYLTTDLPIHADDLAEHQGDTAAVVDGMIQRVVERMYADTEENQFLEVTYASGDKETLYFKDFNSGAMIQNIVDRAKKSAIKDFLATGQRGIRVEHLVTACVDEFKENEDLPNTTNPDDWARISGKKGERIVFIRTIVQDKNGSGRSAAGRTIETATSTGQYL.

A disordered region spans residues methionine 1–aspartate 28. The span at methionine 14–serine 24 shows a compositional bias: polar residues. The stretch at glutamate 27–lysine 66 forms a coiled coil. Glycine 248–leucine 253 serves as a coordination point for ATP. The interval glycine 561–leucine 581 is disordered. Over residues glutamate 572–leucine 581 the composition is skewed to polar residues. The docks into pockets in the proteasome alpha-ring stretch occupies residues tyrosine 580 to leucine 581.

This sequence belongs to the AAA ATPase family. As to quaternary structure, homohexamer. Assembles into a hexameric ring structure that caps the 20S proteasome core. Strongly interacts with the prokaryotic ubiquitin-like protein Pup through a hydrophobic interface; the interacting region of ARC lies in its N-terminal coiled-coil domain. There is one Pup binding site per ARC hexamer ring. Upon ATP-binding, the C-terminus of ARC interacts with the alpha-rings of the proteasome core, possibly by binding to the intersubunit pockets.

The protein operates within protein degradation; proteasomal Pup-dependent pathway. ATPase which is responsible for recognizing, binding, unfolding and translocation of pupylated proteins into the bacterial 20S proteasome core particle. May be essential for opening the gate of the 20S proteasome via an interaction with its C-terminus, thereby allowing substrate entry and access to the site of proteolysis. Thus, the C-termini of the proteasomal ATPase may function like a 'key in a lock' to induce gate opening and therefore regulate proteolysis. The sequence is that of Proteasome-associated ATPase from Sanguibacter keddieii (strain ATCC 51767 / DSM 10542 / NCFB 3025 / ST-74).